Here is a 170-residue protein sequence, read N- to C-terminus: CDP-archaeol synthase (170 aa).

Helical transmembrane passes span 9 to 29 (AFWY…LGGG), 53 to 73 (GFFG…FLLP), 79 to 99 (LGIA…GDLI), 114 to 134 (PAVG…AYPV), and 140 to 160 (GEVL…NIFA).

The protein belongs to the CDP-archaeol synthase family. Requires Mg(2+) as cofactor.

Its subcellular location is the cell membrane. It catalyses the reaction 2,3-bis-O-(geranylgeranyl)-sn-glycerol 1-phosphate + CTP + H(+) = CDP-2,3-bis-O-(geranylgeranyl)-sn-glycerol + diphosphate. It functions in the pathway membrane lipid metabolism; glycerophospholipid metabolism. In terms of biological role, catalyzes the formation of CDP-2,3-bis-(O-geranylgeranyl)-sn-glycerol (CDP-archaeol) from 2,3-bis-(O-geranylgeranyl)-sn-glycerol 1-phosphate (DGGGP) and CTP. This reaction is the third ether-bond-formation step in the biosynthesis of archaeal membrane lipids. This is CDP-archaeol synthase from Pyrococcus horikoshii (strain ATCC 700860 / DSM 12428 / JCM 9974 / NBRC 100139 / OT-3).